We begin with the raw amino-acid sequence, 362 residues long: S-adenosylmethionine-dependent nucleotide dehydratase RSAD2 (362 aa).

The tract at residues 49 to 71 is disordered; it reads QQLQGKTEAGEPPRAQEDSHLPT. Positions 56–68 are enriched in basic and acidic residues; that stretch reads EAGEPPRAQEDSH. A Radical SAM core domain is found at 70–290; sequence PTTPTSVNYH…LDRHKDVSCL (221 aa). Cys84, Cys88, and Cys91 together coordinate [4Fe-4S] cluster. Lys198 carries the post-translational modification N6-acetyllysine. Lys207 is covalently cross-linked (Glycyl lysine isopeptide (Lys-Gly) (interchain with G-Cter in ubiquitin)).

It belongs to the radical SAM superfamily. RSAD2 family. As to quaternary structure, homodimer. Interacts with IRAK1 and TRAF6. Interacts with FPPS. Interacts with HADHB. Interacts (via C-terminus) with VAPA/VAP33 (via C-terminus). It depends on [4Fe-4S] cluster as a cofactor. Post-translationally, acetylated by HAT1. HAT1-mediated acetylation of Lys-198 in turn recruits UBE4A that stimulates RSAD2 polyubiquitination leading to proteasomal degradation. 'Lys-6'-linked polyubiquitination at Lys-207 leads to RSAD2 protein degradation.

Its subcellular location is the endoplasmic reticulum membrane. The protein resides in the golgi apparatus. It localises to the endoplasmic reticulum. It is found in the lipid droplet. The protein localises to the mitochondrion. Its subcellular location is the mitochondrion inner membrane. The protein resides in the mitochondrion outer membrane. It carries out the reaction CTP + AH2 + S-adenosyl-L-methionine = 3'-deoxy-3',4'-didehydro-CTP + 5'-deoxyadenosine + L-methionine + A + H2O + H(+). With respect to regulation, IRAK1 and TRAF6 synergistically activate RSAD2 increasing its activity with CTP as substrate about 10-fold. Interferon-inducible antiviral protein which plays a major role in the cell antiviral state induced by type I and type II interferon. Catalyzes the conversion of cytidine triphosphate (CTP) to 3'-deoxy-3',4'-didehydro-CTP (ddhCTP) via a SAM-dependent radical mechanism. In turn, ddhCTP acts as a chain terminator for the RNA-dependent RNA polymerases from multiple viruses and directly inhibits viral replication. Therefore, inhibits a wide range of DNA and RNA viruses. Also promotes TLR7 and TLR9-dependent production of IFN-beta production in plasmacytoid dendritic cells (pDCs) by facilitating 'Lys-63'-linked ubiquitination of IRAK1 by TRAF6. Plays a role in CD4+ T-cells activation and differentiation. Facilitates T-cell receptor (TCR)-mediated GATA3 activation and optimal T-helper 2 (Th2) cytokine production by modulating NFKB1 and JUNB activities. Can inhibit secretion of soluble proteins. This Sus scrofa (Pig) protein is S-adenosylmethionine-dependent nucleotide dehydratase RSAD2.